The sequence spans 156 residues: Small ribosomal subunit protein uS7 (156 aa).

This sequence belongs to the universal ribosomal protein uS7 family. In terms of assembly, part of the 30S ribosomal subunit. Contacts proteins S9 and S11.

In terms of biological role, one of the primary rRNA binding proteins, it binds directly to 16S rRNA where it nucleates assembly of the head domain of the 30S subunit. Is located at the subunit interface close to the decoding center, probably blocks exit of the E-site tRNA. This Teredinibacter turnerae (strain ATCC 39867 / T7901) protein is Small ribosomal subunit protein uS7.